Here is a 556-residue protein sequence, read N- to C-terminus: 2-methylpropanoate--CoA ligase CCL4 (556 aa).

Residues 192–200 (TSGTTSSPK), 325–330 (HGYGLT), Asp-423, 435–438 (IKDR), and Lys-531 contribute to the ATP site. Residues 260–325 (DSEIIYDMIK…TESLGFAVSH (66 aa)) form an SBD1 region. An SBD2 region spans residues 326–402 (GYGLTETAGL…LRGGSVMLGY (77 aa)).

Belongs to the ATP-dependent AMP-binding enzyme family. Mostly expressed in old leaves and in cones and glandular trichomes (lupulin glands) after flowering, and, to a lower extent, in stems, young leaves and flowers.

Its subcellular location is the cytoplasm. The protein localises to the cytosol. It carries out the reaction 2-methylpropanoate + ATP + CoA = 2-methylpropanoyl-CoA + AMP + diphosphate. The catalysed reaction is propanoate + ATP + CoA = propanoyl-CoA + AMP + diphosphate. It catalyses the reaction butanoate + ATP + CoA = butanoyl-CoA + AMP + diphosphate. The enzyme catalyses 2-methylbutanoate + ATP + CoA = 2-methylbutanoyl-CoA + AMP + diphosphate. Its pathway is secondary metabolite biosynthesis. Functionally, involved in the biosynthesis of prenylated phenolics natural products which contribute to the bitter taste of beer and display broad biological activities. Catalyzes the ligation of CoA on 2-methylpropanoate (isobutyric acid) and 2-methylbutanoate to produce 2-methylpropanoyl-CoA and 2-methylbutanoyl-CoA, respectively. Can also use propanoate and butanoate as substrates with a lower efficiency. In Humulus lupulus (European hop), this protein is 2-methylpropanoate--CoA ligase CCL4.